We begin with the raw amino-acid sequence, 251 residues long: WUSCHEL-related homeobox 4 (251 aa).

Disordered regions lie at residues Met1 to Ser21 and Leu33 to Pro93. The span at Ser11–Ser21 shows a compositional bias: low complexity. Over residues Lys71–Glu83 the composition is skewed to basic and acidic residues. The homeobox; WUS-type DNA-binding region spans Pro86–Gln150.

It belongs to the WUS homeobox family. In terms of tissue distribution, expressed in the vasculature of the whole plant (roots, hypocotyls, cotyledons and leaves), trichomes and stomata. Expresse in the developing vascular bundles of root and shoot lateral organs.

It localises to the nucleus. Its function is as follows. Promotes differentiation and/or maintenance of the vascular procambium, the initial cells of the developing vasculature. Part of the TDIF-TDR-WOX4 signaling pathway that plays a crucial role in the maintenance of the vascular meristem organization during secondary growth. Is required for promoting the proliferation of procambial/cambial stem cells but not for repressing their commitment to xylem differentiation in response to the TDIF signal. Acts redundantly with WOX14 downstream of the TDR/PXY receptor kinase to regulate procambial cell proliferation and differentiation in vascular tissue, independently of any role in vascular. Acts as a cambium regulator in the inflorescence stem. Is required for auxin-dependent cambium stimulation in the inflorescence stem. This chain is WUSCHEL-related homeobox 4 (WOX4), found in Arabidopsis thaliana (Mouse-ear cress).